A 338-amino-acid chain; its full sequence is NLP effector protein 6 (338 aa).

The first 19 residues, 1–19 (MRFTTIFWISLTVLATVRA), serve as a signal peptide directing secretion. A disordered region spans residues 68 to 119 (LTLSPSASSPAKRNVTLPPDTTMRPDPRQTEPPTEAPTPASTPAPTPDPGPW). The N-linked (GlcNAc...) asparagine glycan is linked to Asn-81. Residues 101 to 117 (TEAPTPASTPAPTPDPG) are compositionally biased toward pro residues. The Conserved undecapeptide motif I motif lies at 205–215 (AIMYSWYFPKD). Residues 222–227 (GHRHDW) carry the Hepta-peptide GHRHDWE motif II motif.

This sequence belongs to the Necrosis inducing protein (NPP1) family.

Its subcellular location is the secreted. Its function is as follows. Secreted effector that contributes strongly to virulence during infection by P.capsici. Causes large necrotic areas in both host C.annuum and non-host N.benthamiana. This is NLP effector protein 6 from Phytophthora capsici.